A 158-amino-acid chain; its full sequence is NADPH-dependent 7-cyano-7-deazaguanine reductase (158 aa).

Cysteine 56 serves as the catalytic Thioimide intermediate. The active-site Proton donor is aspartate 63. Residues 78-80 and 97-98 each bind substrate; these read VES and HE.

This sequence belongs to the GTP cyclohydrolase I family. QueF type 1 subfamily.

The protein resides in the cytoplasm. The catalysed reaction is 7-aminomethyl-7-carbaguanine + 2 NADP(+) = 7-cyano-7-deazaguanine + 2 NADPH + 3 H(+). It participates in tRNA modification; tRNA-queuosine biosynthesis. Its function is as follows. Catalyzes the NADPH-dependent reduction of 7-cyano-7-deazaguanine (preQ0) to 7-aminomethyl-7-deazaguanine (preQ1). This is NADPH-dependent 7-cyano-7-deazaguanine reductase from Rhodopseudomonas palustris (strain BisB5).